The following is a 505-amino-acid chain: Trans-cinnamate 4-monooxygenase (505 aa).

The helical transmembrane segment at 3–23 threads the bilayer; the sequence is LLLLEKTLLGSFVAVLVAILV. Residues 213–218 and A306 each bind (E)-cinnamate; that span reads RSRLAQ. C447 contacts heme.

This sequence belongs to the cytochrome P450 family. Requires heme as cofactor.

The protein localises to the membrane. The enzyme catalyses (E)-cinnamate + reduced [NADPH--hemoprotein reductase] + O2 = (E)-4-coumarate + oxidized [NADPH--hemoprotein reductase] + H2O + H(+). It functions in the pathway phenylpropanoid metabolism; trans-4-coumarate biosynthesis; trans-4-coumarate from trans-cinnamate: step 1/1. In terms of biological role, catalyzes the first oxidative step of the phenylpropanoid pathway in higher plants by transforming trans-cinnamate into p-coumarate. The compounds formed by this pathway are essential components for lignification, pollination, and defense against ultraviolet light, predators and pathogens. The sequence is that of Trans-cinnamate 4-monooxygenase (CYP73A16) from Populus kitakamiensis (Aspen).